The chain runs to 325 residues: MKLFLRSHAVLILLFLLQGLFVFFYYWFAGLHSFSHLFYILGVQLLILAGYLAYRWYKDRGVYHWLSSGQEGTDIPYLGSSVFCSELYEKQMELIRLQHQKLHETEAKLDARVTYMNQWVHQVKTPLSVINLIIQEEDEPVFEQIKKEVRQIEFGLETLLYSSRLDLFERDFKIEAVSLSELLQSVIQSYKRFFIQYRVYPKMNVCDDHQIYTDAKWLKFAIGQVVTNAVKYSAGKSDRLELNVFCDEDRTVLEVKDYGVGIPSQDIKRVFDPYYTGENGRRFQESTGIGLHLVKEITDKLNHTVDISSSPGEGTSVRFSFLTKM.

The Cytoplasmic segment spans residues 1-8 (MKLFLRSH). The helical transmembrane segment at 9–29 (AVLILLFLLQGLFVFFYYWFA) threads the bilayer. Residues 30–33 (GLHS) are Extracellular-facing. Residues 34–54 (FSHLFYILGVQLLILAGYLAY) traverse the membrane as a helical segment. Residues 55–325 (RWYKDRGVYH…SVRFSFLTKM (271 aa)) lie on the Cytoplasmic side of the membrane. In terms of domain architecture, Histidine kinase spans 118–325 (QWVHQVKTPL…SVRFSFLTKM (208 aa)). The residue at position 121 (His-121) is a Phosphohistidine; by autocatalysis.

Its subcellular location is the cell membrane. It catalyses the reaction ATP + protein L-histidine = ADP + protein N-phospho-L-histidine.. In terms of biological role, probable member of the two-component regulatory system YxdK/YxdJ. May activate YxdJ in response to the antibacterial protein LL-37. The chain is Sensor histidine kinase YxdK (yxdK) from Bacillus subtilis (strain 168).